The primary structure comprises 635 residues: Two-component response regulator ARR18 (635 aa).

The Response regulatory domain occupies 19–133; sequence RVLAVDDNPT…ELQNIWHHVV (115 aa). Residue Asp-70 is modified to 4-aspartylphosphate. 2 disordered regions span residues 144-196 and 323-342; these read LPPS…KKPR and IQQG…GTYH. The span at 166-186 shows a compositional bias: acidic residues; it reads SGDEDDSDREEDDGEGSEQDG. The Nuclear localization signal motif lies at 193 to 196; sequence KKPR. A DNA-binding region (myb-like GARP) is located at residues 196 to 246; it reads RVVWSQELHQKFVSAVQQLGLDKAVPKKILDLMSIEGLTRENVASHLQKYR.

The protein belongs to the ARR family. Type-B subfamily. Binds the target DNA as a monomer. Post-translationally, two-component system major event consists of a His-to-Asp phosphorelay between a sensor histidine kinase (HK) and a response regulator (RR). In plants, the His-to-Asp phosphorelay involves an additional intermediate named Histidine-containing phosphotransfer protein (HPt). This multistep phosphorelay consists of a His-Asp-His-Asp sequential transfer of a phosphate group between first a His and an Asp of the HK protein, followed by the transfer to a conserved His of the HPt protein and finally the transfer to an Asp in the receiver domain of the RR protein. Predominantly expressed in young leaf tissue developing anthers, and siliques.

Its subcellular location is the nucleus. Functionally, transcriptional activator that binds specifically to the DNA sequence 5'-[AG]GATT-3'. Functions as a response regulator involved in His-to-Asp phosphorelay signal transduction system. Phosphorylation of the Asp residue in the receiver domain activates the ability of the protein to promote the transcription of target genes. Could directly activate some type-A response regulators in response to cytokinins. The sequence is that of Two-component response regulator ARR18 (ARR18) from Arabidopsis thaliana (Mouse-ear cress).